Here is a 175-residue protein sequence, read N- to C-terminus: ATP synthase subunit b (175 aa).

Residues 14-34 form a helical membrane-spanning segment; sequence LNPNPGLIFWTALTFLIVLVI.

The protein belongs to the ATPase B chain family. In terms of assembly, F-type ATPases have 2 components, F(1) - the catalytic core - and F(0) - the membrane proton channel. F(1) has five subunits: alpha(3), beta(3), gamma(1), delta(1), epsilon(1). F(0) has four main subunits: a(1), b(2) and c(10-14). The alpha and beta chains form an alternating ring which encloses part of the gamma chain. F(1) is attached to F(0) by a central stalk formed by the gamma and epsilon chains, while a peripheral stalk is formed by the delta and b chains.

Its subcellular location is the cell inner membrane. In terms of biological role, f(1)F(0) ATP synthase produces ATP from ADP in the presence of a proton or sodium gradient. F-type ATPases consist of two structural domains, F(1) containing the extramembraneous catalytic core and F(0) containing the membrane proton channel, linked together by a central stalk and a peripheral stalk. During catalysis, ATP synthesis in the catalytic domain of F(1) is coupled via a rotary mechanism of the central stalk subunits to proton translocation. Functionally, component of the F(0) channel, it forms part of the peripheral stalk, linking F(1) to F(0). The sequence is that of ATP synthase subunit b from Chlorobaculum tepidum (strain ATCC 49652 / DSM 12025 / NBRC 103806 / TLS) (Chlorobium tepidum).